A 332-amino-acid chain; its full sequence is NH(3)-dependent NAD(+) synthetase (332 aa).

An ATP-binding site is contributed by 48-55 (GLSGGVDS). Position 54 (Asp54) interacts with Mg(2+). Residue Arg184 participates in deamido-NAD(+) binding. Position 204 (Thr204) interacts with ATP. Glu209 contributes to the Mg(2+) binding site. Residues Lys217 and Asp224 each contribute to the deamido-NAD(+) site. ATP-binding residues include Lys233 and Thr255.

Belongs to the NAD synthetase family. In terms of assembly, homodimer.

It carries out the reaction deamido-NAD(+) + NH4(+) + ATP = AMP + diphosphate + NAD(+) + H(+). The protein operates within cofactor biosynthesis; NAD(+) biosynthesis; NAD(+) from deamido-NAD(+) (ammonia route): step 1/1. In terms of biological role, catalyzes the ATP-dependent amidation of deamido-NAD to form NAD. Uses ammonia as a nitrogen source. The sequence is that of NH(3)-dependent NAD(+) synthetase from Rhizobium rhizogenes (strain K84 / ATCC BAA-868) (Agrobacterium radiobacter).